Consider the following 396-residue polypeptide: Elongation factor Tu (396 aa).

The 197-residue stretch at Lys-10 to Glu-206 folds into the tr-type G domain. Residues Gly-19–Thr-26 are G1. A GTP-binding site is contributed by Gly-19 to Thr-26. Mg(2+) is bound at residue Thr-26. Residues Gly-60–Ser-64 form a G2 region. A G3 region spans residues Asp-81 to Gly-84. Residues Asp-81–His-85 and Asn-136–Asp-139 each bind GTP. Residues Asn-136 to Asp-139 are G4. The segment at Ser-174–Leu-176 is G5.

It belongs to the TRAFAC class translation factor GTPase superfamily. Classic translation factor GTPase family. EF-Tu/EF-1A subfamily. Monomer.

The protein resides in the cytoplasm. It carries out the reaction GTP + H2O = GDP + phosphate + H(+). In terms of biological role, GTP hydrolase that promotes the GTP-dependent binding of aminoacyl-tRNA to the A-site of ribosomes during protein biosynthesis. This chain is Elongation factor Tu, found in Rhodopseudomonas palustris (strain ATCC BAA-98 / CGA009).